We begin with the raw amino-acid sequence, 639 residues long: Chaperone protein DnaK (639 aa).

A Phosphothreonine; by autocatalysis modification is found at Thr-198. Residues 603–618 are compositionally biased toward low complexity; that stretch reads AKAQTQGGAQEGAAKQ. Residues 603 to 639 are disordered; that stretch reads AKAQTQGGAQEGAAKQSNATADDVVDAEFEEVKDDKK. Acidic residues predominate over residues 625 to 639; sequence DVVDAEFEEVKDDKK.

This sequence belongs to the heat shock protein 70 family.

In terms of biological role, acts as a chaperone. The sequence is that of Chaperone protein DnaK from Shewanella oneidensis (strain ATCC 700550 / JCM 31522 / CIP 106686 / LMG 19005 / NCIMB 14063 / MR-1).